The chain runs to 163 residues: NADH-quinone oxidoreductase subunit I (163 aa).

4Fe-4S ferredoxin-type domains follow at residues 54–84 and 94–123; these read LRRY…IDSA and TRYD…ETHI. Residues Cys-64, Cys-67, Cys-70, Cys-74, Cys-103, Cys-106, Cys-109, and Cys-113 each contribute to the [4Fe-4S] cluster site.

This sequence belongs to the complex I 23 kDa subunit family. In terms of assembly, NDH-1 is composed of 14 different subunits. Subunits NuoA, H, J, K, L, M, N constitute the membrane sector of the complex. [4Fe-4S] cluster is required as a cofactor.

The protein localises to the cell inner membrane. The catalysed reaction is a quinone + NADH + 5 H(+)(in) = a quinol + NAD(+) + 4 H(+)(out). Its function is as follows. NDH-1 shuttles electrons from NADH, via FMN and iron-sulfur (Fe-S) centers, to quinones in the respiratory chain. The immediate electron acceptor for the enzyme in this species is believed to be ubiquinone. Couples the redox reaction to proton translocation (for every two electrons transferred, four hydrogen ions are translocated across the cytoplasmic membrane), and thus conserves the redox energy in a proton gradient. The chain is NADH-quinone oxidoreductase subunit I from Xylella fastidiosa (strain 9a5c).